Reading from the N-terminus, the 381-residue chain is Homoserine O-succinyltransferase (381 aa).

The region spanning 45–360 (NAVLVCHALN…PHGHDAFLLD (316 aa)) is the AB hydrolase-1 domain. Catalysis depends on Ser-151, which acts as the Nucleophile. Arg-221 contacts substrate. Catalysis depends on residues Asp-321 and His-354. Asp-355 provides a ligand contact to substrate.

The protein belongs to the AB hydrolase superfamily. MetX family. As to quaternary structure, homodimer.

The protein resides in the cytoplasm. It catalyses the reaction L-homoserine + succinyl-CoA = O-succinyl-L-homoserine + CoA. Its pathway is amino-acid biosynthesis; L-methionine biosynthesis via de novo pathway; O-succinyl-L-homoserine from L-homoserine: step 1/1. Functionally, transfers a succinyl group from succinyl-CoA to L-homoserine, forming succinyl-L-homoserine. In Burkholderia pseudomallei (strain 1710b), this protein is Homoserine O-succinyltransferase.